The following is a 180-amino-acid chain: O-acetyl-ADP-ribose deacetylase (180 aa).

The region spanning 1–175 (MSGRINVVQG…LYQRLLGQYD (175 aa)) is the Macro domain. Substrate-binding positions include 11-12 (DI), N25, 33-35 (GVD), and 122-126 (STGIY). D35 functions as the Proton acceptor in the catalytic mechanism.

It belongs to the MacroD-type family. YmdB subfamily. In terms of assembly, homodimer. Interacts with RNase III.

The catalysed reaction is 3''-O-acetyl-ADP-D-ribose + H2O = ADP-D-ribose + acetate + H(+). It catalyses the reaction 2''-O-acetyl-ADP-D-ribose + H2O = ADP-D-ribose + acetate + H(+). In terms of biological role, deacetylates O-acetyl-ADP ribose to yield ADP-ribose and free acetate. Down-regulates ribonuclease 3 (RNase III) activity. Acts by interacting directly with the region of the ribonuclease that is required for dimerization/activation. The chain is O-acetyl-ADP-ribose deacetylase from Cronobacter sakazakii (strain ATCC BAA-894) (Enterobacter sakazakii).